We begin with the raw amino-acid sequence, 337 residues long: Probable RuBisCO transcriptional regulator (337 aa).

In terms of domain architecture, HTH lysR-type spans 6 to 63; that stretch reads FTLDQLRILKAIAVEGSFKRAADSLYVSQPAVSLQVQNLERQLDVPLFDRGGRRAQLT. Residues 23 to 42 constitute a DNA-binding region (H-T-H motif); that stretch reads FKRAADSLYVSQPAVSLQVQ.

The protein belongs to the LysR transcriptional regulatory family.

In terms of biological role, trans-acting transcriptional regulator of RuBisCO genes (rbcL and rbcS) expression. This Trichormus variabilis (strain ATCC 29413 / PCC 7937) (Anabaena variabilis) protein is Probable RuBisCO transcriptional regulator (rbcR).